We begin with the raw amino-acid sequence, 162 residues long: Probable chemoreceptor glutamine deamidase CheD (162 aa).

Belongs to the CheD family.

It carries out the reaction L-glutaminyl-[protein] + H2O = L-glutamyl-[protein] + NH4(+). Functionally, probably deamidates glutamine residues to glutamate on methyl-accepting chemotaxis receptors (MCPs), playing an important role in chemotaxis. The chain is Probable chemoreceptor glutamine deamidase CheD from Clostridium botulinum (strain Eklund 17B / Type B).